We begin with the raw amino-acid sequence, 501 residues long: Mitochondrial inner membrane i-AAA protease supercomplex subunit MGR3 (501 aa).

At 1-77 the chain is on the mitochondrial matrix side; the sequence is MLLQGMRLSQ…PKPNLKKKNR (77 aa). The disordered stretch occupies residues 39–72; the sequence is RPPASNFNTQESAPIPESPANSPTRPQMAPKPNL. A helical membrane pass occupies residues 78 to 95; that stretch reads SLMYSIIGVSIVGLYFWF. The Mitochondrial intermembrane segment spans residues 96-501; it reads KSNSRKQKLP…LKAAKKEGLN (406 aa). TPR repeat units follow at residues 109–144, 154–187, 386–420, and 440–473; these read QKVW…CDRS, TRIE…FFEA, GTYI…AKRN, and ALST…AKET.

It belongs to the MGR3 family. Component of the mitochondrial inner membrane i-AAA protease supercomplex composed of MGR1, MGR3 and YME1. With MGR1, forms a subcomplex that binds to YME1 and to substrates to facilitate proteolysis.

The protein localises to the mitochondrion inner membrane. Component of the mitochondrial inner membrane i-AAA protease supercomplex, which degrades misfolded mitochondrial proteins. Together with MGR1, functions in an adapter complex that targets substrates to the i-AAA protease for degradation. Required for growth of cells lacking the mitochondrial genome. The sequence is that of Mitochondrial inner membrane i-AAA protease supercomplex subunit MGR3 (MGR3) from Saccharomyces cerevisiae (strain ATCC 204508 / S288c) (Baker's yeast).